The sequence spans 238 residues: Large ribosomal subunit protein uL1 (238 aa).

Belongs to the universal ribosomal protein uL1 family. In terms of assembly, part of the 50S ribosomal subunit.

Binds directly to 23S rRNA. The L1 stalk is quite mobile in the ribosome, and is involved in E site tRNA release. In terms of biological role, protein L1 is also a translational repressor protein, it controls the translation of the L11 operon by binding to its mRNA. This is Large ribosomal subunit protein uL1 from Saccharopolyspora erythraea (strain ATCC 11635 / DSM 40517 / JCM 4748 / NBRC 13426 / NCIMB 8594 / NRRL 2338).